The sequence spans 312 residues: Ribosomal RNA small subunit methyltransferase H (312 aa).

Residues 32 to 34, D52, F79, D100, and Q107 each bind S-adenosyl-L-methionine; that span reads AGH.

It belongs to the methyltransferase superfamily. RsmH family.

It is found in the cytoplasm. It carries out the reaction cytidine(1402) in 16S rRNA + S-adenosyl-L-methionine = N(4)-methylcytidine(1402) in 16S rRNA + S-adenosyl-L-homocysteine + H(+). Specifically methylates the N4 position of cytidine in position 1402 (C1402) of 16S rRNA. This Listeria monocytogenes serotype 4b (strain CLIP80459) protein is Ribosomal RNA small subunit methyltransferase H.